Here is a 468-residue protein sequence, read N- to C-terminus: UDP-N-acetylmuramate--L-alanine ligase (468 aa).

Glycine 121 to threonine 127 is an ATP binding site.

The protein belongs to the MurCDEF family.

It localises to the cytoplasm. The catalysed reaction is UDP-N-acetyl-alpha-D-muramate + L-alanine + ATP = UDP-N-acetyl-alpha-D-muramoyl-L-alanine + ADP + phosphate + H(+). The protein operates within cell wall biogenesis; peptidoglycan biosynthesis. Its function is as follows. Cell wall formation. The sequence is that of UDP-N-acetylmuramate--L-alanine ligase from Borreliella afzelii (strain PKo) (Borrelia afzelii).